The primary structure comprises 443 residues: Glutamate-1-semialdehyde 2,1-aminomutase (443 aa).

Lysine 272 carries the post-translational modification N6-(pyridoxal phosphate)lysine.

The protein belongs to the class-III pyridoxal-phosphate-dependent aminotransferase family. HemL subfamily. Homodimer. The cofactor is pyridoxal 5'-phosphate.

Its subcellular location is the cytoplasm. The catalysed reaction is (S)-4-amino-5-oxopentanoate = 5-aminolevulinate. The protein operates within porphyrin-containing compound metabolism; protoporphyrin-IX biosynthesis; 5-aminolevulinate from L-glutamyl-tRNA(Glu): step 2/2. It participates in porphyrin-containing compound metabolism; chlorophyll biosynthesis. This is Glutamate-1-semialdehyde 2,1-aminomutase from Chloroflexus aurantiacus (strain ATCC 29366 / DSM 635 / J-10-fl).